The sequence spans 82 residues: MRTFTLIAILTCALLVIYHAAEAEELEAKDVIESKALATLDEERFECSLSCDIKKNGKPCKGSGEKKCSGGWRCKMNFCLKF.

An N-terminal signal peptide occupies residues 1–23 (MRTFTLIAILTCALLVIYHAAEA). A propeptide spanning residues 24–44 (EELEAKDVIESKALATLDEER) is cleaved from the precursor.

It belongs to the neurotoxin 12 (Hwtx-2) family. 03 (juruin) subfamily. Contains 3 disulfide bonds. Two different connectivities are observed in similar proteins (C1-C3, C2-C5, C4-C6 or C1-C4, C2-C5, C3-C6). In terms of tissue distribution, expressed by the venom gland.

The protein resides in the secreted. Its function is as follows. This toxin causes paralysis and death to sheep blowflies. It does not target insect sodium channels. The sequence is that of U1-theraphotoxin-Ct1b from Coremiocnemis tropix (Australian tarantula spider).